Reading from the N-terminus, the 78-residue chain is Large ribosomal subunit protein uL24 (78 aa).

The protein belongs to the universal ribosomal protein uL24 family. In terms of assembly, part of the 50S ribosomal subunit.

In terms of biological role, one of two assembly initiator proteins, it binds directly to the 5'-end of the 23S rRNA, where it nucleates assembly of the 50S subunit. One of the proteins that surrounds the polypeptide exit tunnel on the outside of the subunit. This chain is Large ribosomal subunit protein uL24, found in Helicobacter hepaticus (strain ATCC 51449 / 3B1).